Here is a 179-residue protein sequence, read N- to C-terminus: Tetratricopeptide repeat protein 36 (179 aa).

TPR repeat units lie at residues 43–76 (SLQL…CPKN), 78–110 (SAYN…AGPK), and 115–148 (CQAY…GSSF).

Belongs to the TTC36 family.

The sequence is that of Tetratricopeptide repeat protein 36 from Caenorhabditis elegans.